We begin with the raw amino-acid sequence, 347 residues long: tRNA N6-adenosine threonylcarbamoyltransferase (347 aa).

Fe cation is bound by residues His113 and His117. Residues 136-140 (LVSGG), Asp170, Gly183, Asp187, and Asn282 each bind substrate. Asp310 contacts Fe cation.

Belongs to the KAE1 / TsaD family. Fe(2+) serves as cofactor.

It localises to the cytoplasm. The catalysed reaction is L-threonylcarbamoyladenylate + adenosine(37) in tRNA = N(6)-L-threonylcarbamoyladenosine(37) in tRNA + AMP + H(+). Its function is as follows. Required for the formation of a threonylcarbamoyl group on adenosine at position 37 (t(6)A37) in tRNAs that read codons beginning with adenine. Is involved in the transfer of the threonylcarbamoyl moiety of threonylcarbamoyl-AMP (TC-AMP) to the N6 group of A37, together with TsaE and TsaB. TsaD likely plays a direct catalytic role in this reaction. The sequence is that of tRNA N6-adenosine threonylcarbamoyltransferase from Cutibacterium acnes (strain DSM 16379 / KPA171202) (Propionibacterium acnes).